We begin with the raw amino-acid sequence, 524 residues long: Strychnine-10-hydroxylase (524 aa).

Residues Leu-6 to Phe-26 form a helical membrane-spanning segment. Cys-466 is a heme binding site.

It belongs to the cytochrome P450 family. It depends on heme as a cofactor.

The protein resides in the membrane. The catalysed reaction is strychnine + reduced [NADPH--hemoprotein reductase] + O2 = 10-hydroxystrychnine + oxidized [NADPH--hemoprotein reductase] + H2O + H(+). It participates in alkaloid biosynthesis. Functionally, monooxygenase involved in the biosynthesis of curare monoterpene indole alkaloids (MIAs), natural products such as strychnine, a neurotoxic compound used as a pesticide to control rodents, and its pharmacologically active derivatives, including brucine, used to regulate blood pressure. Curare alkaloids act as animal glycine receptor antagonists. Catalyzes the conversion of strychnine to 10-OH strychnine. This Strychnos nux-vomica (Poison nut) protein is Strychnine-10-hydroxylase.